The sequence spans 529 residues: Peptide chain release factor 3 (529 aa).

One can recognise a tr-type G domain in the interval Ala-11–Met-280. Residues Ser-20 to Thr-27, Asp-88 to His-92, and Asn-142 to Asp-145 each bind GTP.

The protein belongs to the TRAFAC class translation factor GTPase superfamily. Classic translation factor GTPase family. PrfC subfamily.

The protein resides in the cytoplasm. Its function is as follows. Increases the formation of ribosomal termination complexes and stimulates activities of RF-1 and RF-2. It binds guanine nucleotides and has strong preference for UGA stop codons. It may interact directly with the ribosome. The stimulation of RF-1 and RF-2 is significantly reduced by GTP and GDP, but not by GMP. The polypeptide is Peptide chain release factor 3 (Shigella flexneri).